A 375-amino-acid polypeptide reads, in one-letter code: MGLSRIAFTNLRNISSLKLDTSARLLLFHGNNGSGKSSLLEGVYLLGRGASFRTKELDYAVSHLSDEMVCFGEAVNEDAGKSFRIGVSRQKTGKLTRVRINGESARTLSELAAALPILIVTPDTFGFINGGPGERRRFVDWGVFHVEHQFKVVWQNWRKLLLQRNKLLKSGNISRSELSAWDNQYVAYSDEISRYRDAYFAELKEILIESLKESSEQTRDIGDKLTITLSNGWYQNDVNHMDQLASSVESDVKKGFTTLGPHRADIKVKVGGVHAKEVLSRGQQKTLITHLYLSQLEILRRRTNQRPIVLIDDVGAELDTGNQVTLLTRMLEKGAQVFVTVLDKQQSEYLFGHFNQEYDTQMFHVEQGAVTKVHN.

30-37 lines the ATP pocket; that stretch reads GNNGSGKS.

This sequence belongs to the RecF family.

Its subcellular location is the cytoplasm. In terms of biological role, the RecF protein is involved in DNA metabolism; it is required for DNA replication and normal SOS inducibility. RecF binds preferentially to single-stranded, linear DNA. It also seems to bind ATP. This Hahella chejuensis (strain KCTC 2396) protein is DNA replication and repair protein RecF.